Consider the following 928-residue polypeptide: Eukaryotic translation initiation factor 3 subunit C (928 aa).

Disordered stretches follow at residues 1-37 (MSRF…SDDE) and 157-286 (FREA…EDGE). Over residues 11 to 20 (SESESSEEEV) the composition is skewed to acidic residues. Over residues 22–33 (TQFNNKAQNFQF) the composition is skewed to polar residues. Phosphoserine is present on residues S34, S165, S177, and S186. The segment covering 162–171 (DQESDVDEGE) has biased composition (acidic residues). The segment covering 172-184 (GDVHDSDADRAGD) has biased composition (basic and acidic residues). Over residues 215–240 (DDDDSEDSIDWDPDTESETESSEDEN) the composition is skewed to acidic residues. Basic and acidic residues predominate over residues 245-264 (MRERFLKRTTEKEDKDDDKR). Residues 265-277 (KDKRKEQKHKVRK) show a composition bias toward basic residues. The region spanning 656–832 (FHMHINLELL…ETVVMHRSEP (177 aa)) is the PCI domain. Positions 864 to 928 (FFQRGNMGNR…QQQVHTIDEE (65 aa)) are disordered. Basic residues predominate over residues 898-909 (QRNRNQRGHHKQ). Residues 910 to 921 (NQQQNQQQQQQQ) are compositionally biased toward low complexity.

The protein belongs to the eIF-3 subunit C family. As to quaternary structure, component of the eukaryotic translation initiation factor 3 (eIF-3) complex. The eIF-3 complex interacts with pix.

Its subcellular location is the cytoplasm. Component of the eukaryotic translation initiation factor 3 (eIF-3) complex, which is involved in protein synthesis of a specialized repertoire of mRNAs and, together with other initiation factors, stimulates binding of mRNA and methionyl-tRNAi to the 40S ribosome. The eIF-3 complex specifically targets and initiates translation of a subset of mRNAs involved in cell proliferation. This is Eukaryotic translation initiation factor 3 subunit C from Drosophila grimshawi (Hawaiian fruit fly).